We begin with the raw amino-acid sequence, 265 residues long: Hydroxyethylthiazole kinase (265 aa).

Substrate is bound at residue M50. Residues R125 and T171 each contribute to the ATP site. Position 198 (G198) interacts with substrate.

It belongs to the Thz kinase family. Mg(2+) serves as cofactor.

The catalysed reaction is 5-(2-hydroxyethyl)-4-methylthiazole + ATP = 4-methyl-5-(2-phosphooxyethyl)-thiazole + ADP + H(+). Its pathway is cofactor biosynthesis; thiamine diphosphate biosynthesis; 4-methyl-5-(2-phosphoethyl)-thiazole from 5-(2-hydroxyethyl)-4-methylthiazole: step 1/1. Functionally, catalyzes the phosphorylation of the hydroxyl group of 4-methyl-5-beta-hydroxyethylthiazole (THZ). The chain is Hydroxyethylthiazole kinase from Salmonella typhimurium (strain LT2 / SGSC1412 / ATCC 700720).